A 278-amino-acid chain; its full sequence is Large ribosomal subunit protein uL2 (278 aa).

Disordered regions lie at residues 28 to 58 (TPEK…GGGH) and 223 to 278 (GVVM…KNKR). Over residues 43–53 (RNNQGRITTRH) the composition is skewed to polar residues. Residues 268–278 (IRRRKTGKNKR) are compositionally biased toward basic residues.

The protein belongs to the universal ribosomal protein uL2 family. Part of the 50S ribosomal subunit. Forms a bridge to the 30S subunit in the 70S ribosome.

One of the primary rRNA binding proteins. Required for association of the 30S and 50S subunits to form the 70S ribosome, for tRNA binding and peptide bond formation. It has been suggested to have peptidyltransferase activity; this is somewhat controversial. Makes several contacts with the 16S rRNA in the 70S ribosome. In Nocardioides sp. (strain ATCC BAA-499 / JS614), this protein is Large ribosomal subunit protein uL2.